Reading from the N-terminus, the 540-residue chain is Phenylalanine--tRNA ligase beta subunit (540 aa).

One can recognise a B5 domain in the interval 270 to 347 (MTPRTLNVPR…IGYGFDKIKS (78 aa)). Residues Asp-325, Asp-331, Glu-334, and Asp-335 each contribute to the Mg(2+) site.

The protein belongs to the phenylalanyl-tRNA synthetase beta subunit family. Type 2 subfamily. In terms of assembly, tetramer of two alpha and two beta subunits. Mg(2+) is required as a cofactor.

It localises to the cytoplasm. The catalysed reaction is tRNA(Phe) + L-phenylalanine + ATP = L-phenylalanyl-tRNA(Phe) + AMP + diphosphate + H(+). The protein is Phenylalanine--tRNA ligase beta subunit of Methanococcoides burtonii (strain DSM 6242 / NBRC 107633 / OCM 468 / ACE-M).